The chain runs to 248 residues: 2,3-bisphosphoglycerate-dependent phosphoglycerate mutase (248 aa).

Substrate-binding positions include 8-15 (RHGESIWN), 21-22 (TG), arginine 60, 87-90 (EKHY), lysine 98, 114-115 (RR), and 183-184 (GN). The active-site Tele-phosphohistidine intermediate is the histidine 9. Catalysis depends on glutamate 87, which acts as the Proton donor/acceptor.

Belongs to the phosphoglycerate mutase family. BPG-dependent PGAM subfamily.

The catalysed reaction is (2R)-2-phosphoglycerate = (2R)-3-phosphoglycerate. Its pathway is carbohydrate degradation; glycolysis; pyruvate from D-glyceraldehyde 3-phosphate: step 3/5. In terms of biological role, catalyzes the interconversion of 2-phosphoglycerate and 3-phosphoglycerate. This is 2,3-bisphosphoglycerate-dependent phosphoglycerate mutase from Parabacteroides distasonis (strain ATCC 8503 / DSM 20701 / CIP 104284 / JCM 5825 / NCTC 11152).